Consider the following 458-residue polypeptide: D-inositol 3-phosphate glycosyltransferase (458 aa).

Residue H16 coordinates 1D-myo-inositol 3-phosphate. UDP-N-acetyl-alpha-D-glucosamine is bound by residues 22-23 and G30; that span reads QP. Residues 27-32, K85, Y118, T142, and R162 each bind 1D-myo-inositol 3-phosphate; that span reads DAGGMN. Positions 236, 241, and 302 each coordinate UDP-N-acetyl-alpha-D-glucosamine. Y311, R312, and S314 together coordinate Mg(2+). 2 residues coordinate UDP-N-acetyl-alpha-D-glucosamine: E324 and E332. Mg(2+) is bound at residue T338. Residues 428–458 form a disordered region; sequence VAAQNVTGSSSRTRRPWRRRRSTLLPMTGRS. Residues 439–449 are compositionally biased toward basic residues; it reads RTRRPWRRRRS.

The protein belongs to the glycosyltransferase group 1 family. MshA subfamily. Homodimer.

The catalysed reaction is 1D-myo-inositol 3-phosphate + UDP-N-acetyl-alpha-D-glucosamine = 1D-myo-inositol 2-acetamido-2-deoxy-alpha-D-glucopyranoside 3-phosphate + UDP + H(+). Catalyzes the transfer of a N-acetyl-glucosamine moiety to 1D-myo-inositol 3-phosphate to produce 1D-myo-inositol 2-acetamido-2-deoxy-glucopyranoside 3-phosphate in the mycothiol biosynthesis pathway. This Gordonia bronchialis (strain ATCC 25592 / DSM 43247 / BCRC 13721 / JCM 3198 / KCTC 3076 / NBRC 16047 / NCTC 10667) (Rhodococcus bronchialis) protein is D-inositol 3-phosphate glycosyltransferase.